The sequence spans 170 residues: ATP synthase subunit b (170 aa).

Residues 22–41 (ILNWAVVVFGLYKFLPGFLG) form a helical membrane-spanning segment. The interval 72–98 (AKKDLSSAEEKASQIKADSLKRSESIR) is disordered.

It belongs to the ATPase B chain family. In terms of assembly, F-type ATPases have 2 components, F(1) - the catalytic core - and F(0) - the membrane proton channel. F(1) has five subunits: alpha(3), beta(3), gamma(1), delta(1), epsilon(1). F(0) has four main subunits: a(1), b(1), b'(1) and c(10-14). The alpha and beta chains form an alternating ring which encloses part of the gamma chain. F(1) is attached to F(0) by a central stalk formed by the gamma and epsilon chains, while a peripheral stalk is formed by the delta, b and b' chains.

It is found in the cellular thylakoid membrane. Functionally, f(1)F(0) ATP synthase produces ATP from ADP in the presence of a proton or sodium gradient. F-type ATPases consist of two structural domains, F(1) containing the extramembraneous catalytic core and F(0) containing the membrane proton channel, linked together by a central stalk and a peripheral stalk. During catalysis, ATP synthesis in the catalytic domain of F(1) is coupled via a rotary mechanism of the central stalk subunits to proton translocation. Its function is as follows. Component of the F(0) channel, it forms part of the peripheral stalk, linking F(1) to F(0). The polypeptide is ATP synthase subunit b (Prochlorococcus marinus (strain MIT 9301)).